Consider the following 443-residue polypeptide: Probable D-serine dehydratase (443 aa).

N6-(pyridoxal phosphate)lysine is present on Lys-116.

It belongs to the serine/threonine dehydratase family. DsdA subfamily. It depends on pyridoxal 5'-phosphate as a cofactor.

The enzyme catalyses D-serine = pyruvate + NH4(+). The sequence is that of Probable D-serine dehydratase from Bacillus cereus (strain G9842).